The primary structure comprises 132 residues: Tail assembly protein Gp24 (132 aa).

Belongs to the L5likevirus tail assembly protein family. In terms of assembly, interacts with tail assembly protein Gp25 and tape measure protein.

Functionally, promotes tail assembly by creating a scaffold for the tail tube proteins. The tail assembly proteins Gp24 and Gp25 would wrap the linear tape measure protein to create a tail assembly scaffold. It would allow polymerization of tail tube protein during which Gp24 and Gp25 are released and therefore are absent from the mature virion. The tail assembly protein Gp25 is produced by a rare -1 ribosomal frameshift. The ratio Gp24/Gp25 is important for proper tail assembly. This is Tail assembly protein Gp24 (24) from Mycobacterium (Mycobacteriophage L5).